Here is a 342-residue protein sequence, read N- to C-terminus: Ferredoxin--NADP reductase (342 aa).

Positions 17, 36, 44, 49, 89, 124, 289, and 330 each coordinate FAD.

Belongs to the ferredoxin--NADP reductase type 2 family. As to quaternary structure, homodimer. FAD serves as cofactor.

It carries out the reaction 2 reduced [2Fe-2S]-[ferredoxin] + NADP(+) + H(+) = 2 oxidized [2Fe-2S]-[ferredoxin] + NADPH. In Nitrobacter winogradskyi (strain ATCC 25391 / DSM 10237 / CIP 104748 / NCIMB 11846 / Nb-255), this protein is Ferredoxin--NADP reductase.